Reading from the N-terminus, the 230-residue chain is Tol-Pal system protein TolQ (230 aa).

3 consecutive transmembrane segments (helical) span residues 16–36 (LVKLIMLILIGFSIASWAIII), 139–159 (YIGLFGTVWGIMHAFIALGAV), and 171–191 (IAEALIATAIGLFAAIPAVMA).

It belongs to the ExbB/TolQ family. As to quaternary structure, the Tol-Pal system is composed of five core proteins: the inner membrane proteins TolA, TolQ and TolR, the periplasmic protein TolB and the outer membrane protein Pal. They form a network linking the inner and outer membranes and the peptidoglycan layer.

It localises to the cell inner membrane. Its function is as follows. Part of the Tol-Pal system, which plays a role in outer membrane invagination during cell division and is important for maintaining outer membrane integrity. Required, with TolR, for the proton motive force-dependent activation of TolA and for TolA-Pal interaction. In Escherichia coli O157:H7, this protein is Tol-Pal system protein TolQ.